A 442-amino-acid polypeptide reads, in one-letter code: Putative aminohydrolase SsnA (442 aa).

His62, His64, His227, and Asp312 together coordinate Zn(2+).

This sequence belongs to the metallo-dependent hydrolases superfamily. ATZ/TRZ family.

In Escherichia coli (strain K12), this protein is Putative aminohydrolase SsnA (ssnA).